The sequence spans 478 residues: Ankyrin repeat and BTB/POZ domain-containing protein 1 (478 aa).

ANK repeat units follow at residues 1–31 (MDTSDLFASCRKGDVGRVRYLLEQRDVEVNV) and 35–64 (WDSTPLYYACLCGHEELVRYLLANGARCEA). 2 BTB domains span residues 115–182 (SDVV…DIGV) and 272–346 (PDIC…ELPP). Residues 450-478 (TVQTYSAIEEAQQQLRALENLLVSIGLDC) adopt a coiled-coil conformation.

It is found in the cytoplasm. Its function is as follows. May act as a mediator of the PTEN growth-suppressive signaling pathway. May play a role in developmental processes. This Rattus norvegicus (Rat) protein is Ankyrin repeat and BTB/POZ domain-containing protein 1.